The following is a 61-amino-acid chain: Small ribosomal subunit protein uS14 (61 aa).

4 residues coordinate Zn(2+): Cys24, Cys27, Cys40, and Cys43.

This sequence belongs to the universal ribosomal protein uS14 family. Zinc-binding uS14 subfamily. As to quaternary structure, part of the 30S ribosomal subunit. Contacts proteins S3 and S10. Zn(2+) is required as a cofactor.

In terms of biological role, binds 16S rRNA, required for the assembly of 30S particles and may also be responsible for determining the conformation of the 16S rRNA at the A site. This is Small ribosomal subunit protein uS14 from Acidithiobacillus ferrooxidans (strain ATCC 23270 / DSM 14882 / CIP 104768 / NCIMB 8455) (Ferrobacillus ferrooxidans (strain ATCC 23270)).